The sequence spans 357 residues: Elongation factor Ts (357 aa).

Positions 82 to 85 are involved in Mg(2+) ion dislocation from EF-Tu; the sequence is TDFV.

The protein belongs to the EF-Ts family.

The protein localises to the cytoplasm. Associates with the EF-Tu.GDP complex and induces the exchange of GDP to GTP. It remains bound to the aminoacyl-tRNA.EF-Tu.GTP complex up to the GTP hydrolysis stage on the ribosome. This chain is Elongation factor Ts, found in Campylobacter jejuni (strain RM1221).